We begin with the raw amino-acid sequence, 248 residues long: Putative insertion sequence ATP-binding protein y4uH (248 aa).

Residue Gly-106–Ser-113 coordinates ATP.

This sequence belongs to the IS21/IS1162 putative ATP-binding protein family.

This chain is Putative insertion sequence ATP-binding protein y4uH, found in Sinorhizobium fredii (strain NBRC 101917 / NGR234).